A 275-amino-acid chain; its full sequence is Ribosomal RNA small subunit methyltransferase A (275 aa).

S-adenosyl-L-methionine contacts are provided by Asn-28, Leu-30, Gly-55, Glu-77, Asp-103, and Asn-123.

It belongs to the class I-like SAM-binding methyltransferase superfamily. rRNA adenine N(6)-methyltransferase family. RsmA subfamily.

It is found in the cytoplasm. The catalysed reaction is adenosine(1518)/adenosine(1519) in 16S rRNA + 4 S-adenosyl-L-methionine = N(6)-dimethyladenosine(1518)/N(6)-dimethyladenosine(1519) in 16S rRNA + 4 S-adenosyl-L-homocysteine + 4 H(+). Functionally, specifically dimethylates two adjacent adenosines (A1518 and A1519) in the loop of a conserved hairpin near the 3'-end of 16S rRNA in the 30S particle. May play a critical role in biogenesis of 30S subunits. This chain is Ribosomal RNA small subunit methyltransferase A, found in Rhizobium etli (strain ATCC 51251 / DSM 11541 / JCM 21823 / NBRC 15573 / CFN 42).